The chain runs to 377 residues: Probable protein phosphatase 2C 7 (377 aa).

2 disordered regions span residues 1–68 (MAAH…GKAA) and 80–99 (TTVA…EDDE). Positions 21 to 39 (PPAAEAEAAAAAAAIARAA) are enriched in low complexity. Positions 51–63 (GVRHPLKHRRFRA) are enriched in basic residues. Positions 80–89 (TTVAEATATG) are enriched in low complexity. Positions 115–361 (SCGYSSFRGR…DNITCIVVKF (247 aa)) constitute a PPM-type phosphatase domain. 4 residues coordinate Mn(2+): Asp151, Gly152, Asp313, and Asp352.

This sequence belongs to the PP2C family. The cofactor is Mg(2+). Mn(2+) is required as a cofactor.

The catalysed reaction is O-phospho-L-seryl-[protein] + H2O = L-seryl-[protein] + phosphate. It catalyses the reaction O-phospho-L-threonyl-[protein] + H2O = L-threonyl-[protein] + phosphate. The sequence is that of Probable protein phosphatase 2C 7 from Oryza sativa subsp. japonica (Rice).